The primary structure comprises 277 residues: Type II restriction enzyme RsrI (277 aa).

This sequence belongs to the EcoRI type II restriction endonuclease family. In terms of assembly, homodimer. Mg(2+) is required as a cofactor.

It catalyses the reaction Endonucleolytic cleavage of DNA to give specific double-stranded fragments with terminal 5'-phosphates.. Functionally, a P subtype restriction enzyme that recognizes the double-stranded sequence 5'-GAATTC-3' and cleaves after G-1. The polypeptide is Type II restriction enzyme RsrI (rsrIR) (Cereibacter sphaeroides (Rhodobacter sphaeroides)).